The sequence spans 387 residues: Ferrochelatase (387 aa).

Residues His196 and Glu277 each coordinate Fe cation.

The protein belongs to the ferrochelatase family.

It is found in the cytoplasm. The catalysed reaction is heme b + 2 H(+) = protoporphyrin IX + Fe(2+). Its pathway is porphyrin-containing compound metabolism; protoheme biosynthesis; protoheme from protoporphyrin-IX: step 1/1. Its function is as follows. Catalyzes the ferrous insertion into protoporphyrin IX. The polypeptide is Ferrochelatase (Cyanothece sp. (strain PCC 7425 / ATCC 29141)).